The sequence spans 431 residues: Maintenance of mitochondrial morphology protein 1 (431 aa).

The Lumenal segment spans residues 1–103; it reads MVSALEVKSI…QLISWSFAQG (103 aa). The helical transmembrane segment at 104 to 124 threads the bilayer; sequence LIIGQLSVVIFLIFFVKFFIF. The Cytoplasmic segment spans residues 125–431; the sequence is TDASSKMDNP…EDESSKTPHS (307 aa). Residues 192–404 enclose the SMP-LTD domain; it reads SAESLDWFNV…EPRFQSVKLP (213 aa). The tract at residues 412 to 431 is disordered; that stretch reads NTREEVIHKTEDESSKTPHS.

This sequence belongs to the MMM1 family. In terms of assembly, homodimer. Component of the ER-mitochondria encounter structure (ERMES) or MDM complex, composed of MMM1, MDM10, MDM12 and MDM34. An MMM1 homodimer associates with one molecule of MDM12 on each side in a pairwise head-to-tail manner, and the SMP-LTD domains of MMM1 and MDM12 generate a continuous hydrophobic tunnel for phospholipid trafficking.

The protein resides in the endoplasmic reticulum membrane. Component of the ERMES/MDM complex, which serves as a molecular tether to connect the endoplasmic reticulum (ER) and mitochondria. Components of this complex are involved in the control of mitochondrial shape and protein biogenesis, and function in nonvesicular lipid trafficking between the ER and mitochondria. The MDM12-MMM1 subcomplex functions in the major beta-barrel assembly pathway that is responsible for biogenesis of all outer membrane beta-barrel proteins, and acts in a late step after the SAM complex. The MDM10-MDM12-MMM1 subcomplex further acts in the TOM40-specific pathway after the action of the MDM12-MMM1 complex. Essential for establishing and maintaining the structure of mitochondria and maintenance of mtDNA nucleoids. The protein is Maintenance of mitochondrial morphology protein 1 of Candida glabrata (strain ATCC 2001 / BCRC 20586 / JCM 3761 / NBRC 0622 / NRRL Y-65 / CBS 138) (Yeast).